The sequence spans 287 residues: Urease accessory protein UreD (287 aa).

It belongs to the UreD family. As to quaternary structure, ureD, UreF and UreG form a complex that acts as a GTP-hydrolysis-dependent molecular chaperone, activating the urease apoprotein by helping to assemble the nickel containing metallocenter of UreC. The UreE protein probably delivers the nickel.

The protein resides in the cytoplasm. Functionally, required for maturation of urease via the functional incorporation of the urease nickel metallocenter. In Herpetosiphon aurantiacus (strain ATCC 23779 / DSM 785 / 114-95), this protein is Urease accessory protein UreD.